A 501-amino-acid polypeptide reads, in one-letter code: Glutamyl-tRNA(Gln) amidotransferase subunit A (501 aa).

Residues lysine 80 and serine 155 each act as charge relay system in the active site. Catalysis depends on serine 179, which acts as the Acyl-ester intermediate.

It belongs to the amidase family. GatA subfamily. As to quaternary structure, heterotrimer of A, B and C subunits.

It carries out the reaction L-glutamyl-tRNA(Gln) + L-glutamine + ATP + H2O = L-glutaminyl-tRNA(Gln) + L-glutamate + ADP + phosphate + H(+). In terms of biological role, allows the formation of correctly charged Gln-tRNA(Gln) through the transamidation of misacylated Glu-tRNA(Gln) in organisms which lack glutaminyl-tRNA synthetase. The reaction takes place in the presence of glutamine and ATP through an activated gamma-phospho-Glu-tRNA(Gln). This chain is Glutamyl-tRNA(Gln) amidotransferase subunit A, found in Cutibacterium acnes (strain DSM 16379 / KPA171202) (Propionibacterium acnes).